The following is a 366-amino-acid chain: NADH-quinone oxidoreductase subunit D (366 aa).

This sequence belongs to the complex I 49 kDa subunit family. NDH-1 is composed of 14 different subunits. Subunits NuoB, C, D, E, F, and G constitute the peripheral sector of the complex.

The protein localises to the cell membrane. It catalyses the reaction a quinone + NADH + 5 H(+)(in) = a quinol + NAD(+) + 4 H(+)(out). NDH-1 shuttles electrons from NADH, via FMN and iron-sulfur (Fe-S) centers, to quinones in the respiratory chain. The immediate electron acceptor for the enzyme in this species is believed to be a menaquinone. Couples the redox reaction to proton translocation (for every two electrons transferred, four hydrogen ions are translocated across the cytoplasmic membrane), and thus conserves the redox energy in a proton gradient. This chain is NADH-quinone oxidoreductase subunit D, found in Bacillus cereus (strain ATCC 10987 / NRS 248).